The primary structure comprises 162 residues: Ribosome maturation factor RimP (162 aa).

This sequence belongs to the RimP family.

The protein resides in the cytoplasm. Required for maturation of 30S ribosomal subunits. The sequence is that of Ribosome maturation factor RimP from Ralstonia pickettii (strain 12J).